Here is a 98-residue protein sequence, read N- to C-terminus: Co-chaperonin GroES (98 aa).

This sequence belongs to the GroES chaperonin family. In terms of assembly, heptamer of 7 subunits arranged in a ring. Interacts with the chaperonin GroEL.

It localises to the cytoplasm. In terms of biological role, together with the chaperonin GroEL, plays an essential role in assisting protein folding. The GroEL-GroES system forms a nano-cage that allows encapsulation of the non-native substrate proteins and provides a physical environment optimized to promote and accelerate protein folding. GroES binds to the apical surface of the GroEL ring, thereby capping the opening of the GroEL channel. In Agrobacterium fabrum (strain C58 / ATCC 33970) (Agrobacterium tumefaciens (strain C58)), this protein is Co-chaperonin GroES.